Here is a 312-residue protein sequence, read N- to C-terminus: Ribonuclease HIII (312 aa).

The RNase H type-2 domain maps to methionine 95 to lysine 312. The a divalent metal cation site is built by aspartate 101, glutamate 102, and aspartate 206.

It belongs to the RNase HII family. RnhC subfamily. It depends on Mn(2+) as a cofactor. The cofactor is Mg(2+).

The protein localises to the cytoplasm. The catalysed reaction is Endonucleolytic cleavage to 5'-phosphomonoester.. In terms of biological role, endonuclease that specifically degrades the RNA of RNA-DNA hybrids. The sequence is that of Ribonuclease HIII from Bacillus mycoides (strain KBAB4) (Bacillus weihenstephanensis).